The primary structure comprises 880 residues: Leucine--tRNA ligase (880 aa).

The 'HIGH' region signature appears at 46 to 56 (PYPSGALHMGH). A disordered region spans residues 483–502 (SPIKTEPTWRQTTCPDCGGP). The 'KMSKS' region signature appears at 638-642 (KMSKS). An ATP-binding site is contributed by Lys641.

This sequence belongs to the class-I aminoacyl-tRNA synthetase family.

It localises to the cytoplasm. It catalyses the reaction tRNA(Leu) + L-leucine + ATP = L-leucyl-tRNA(Leu) + AMP + diphosphate. The polypeptide is Leucine--tRNA ligase (Xanthomonas oryzae pv. oryzae (strain PXO99A)).